An 85-amino-acid polypeptide reads, in one-letter code: MNYLVMISLALLLMTGVESARDAYIANDRNCVYTCALNPYCDSECKKNGADSGYCQWFGRFGNACWCKNLPDKVPIRIPGECRGR.

The signal sequence occupies residues 1–19 (MNYLVMISLALLLMTGVES). One can recognise an LCN-type CS-alpha/beta domain in the interval 21-83 (RDAYIANDRN…VPIRIPGECR (63 aa)). 4 cysteine pairs are disulfide-bonded: cysteine 31-cysteine 82, cysteine 35-cysteine 55, cysteine 41-cysteine 65, and cysteine 45-cysteine 67. At arginine 83 the chain carries Arginine amide.

This sequence belongs to the long (4 C-C) scorpion toxin superfamily. Sodium channel inhibitor family. Alpha subfamily. As to expression, expressed by the venom gland.

It localises to the secreted. In terms of biological role, alpha toxins bind voltage-independently at site-3 of sodium channels (Nav) and inhibit the inactivation of the activated channels, thereby blocking neuronal transmission. This toxin inhibits inactivation of Nav1.4/SCN4A (EC(50)=2.23 uM) and drosophila DmNav1 (EC(50)=220 nM). The toxin (1 uM) does not significantly shift the midpoint of activation at the two channels, but induces a significant depolarizing shift in the V(1/2) of inactivation of the channels. In addition, the toxin accelerates the recovery from fast inactivation in Nav1.4/SCN4A and DmNav1. It also shows antimicrobial activity. This is Sodium channel neurotoxin MeuNaTxalpha-2 from Mesobuthus eupeus (Lesser Asian scorpion).